Here is a 288-residue protein sequence, read N- to C-terminus: Diaminopimelate epimerase (288 aa).

The substrate site is built by N13, Q46, and N66. The Proton donor role is filled by C75. Substrate contacts are provided by residues 76–77 (GN), N166, N199, and 217–218 (ER). Residue C226 is the Proton acceptor of the active site. Residue 227–228 (GT) coordinates substrate.

It belongs to the diaminopimelate epimerase family. In terms of assembly, homodimer.

It is found in the cytoplasm. It catalyses the reaction (2S,6S)-2,6-diaminopimelate = meso-2,6-diaminopimelate. It functions in the pathway amino-acid biosynthesis; L-lysine biosynthesis via DAP pathway; DL-2,6-diaminopimelate from LL-2,6-diaminopimelate: step 1/1. In terms of biological role, catalyzes the stereoinversion of LL-2,6-diaminopimelate (L,L-DAP) to meso-diaminopimelate (meso-DAP), a precursor of L-lysine and an essential component of the bacterial peptidoglycan. This is Diaminopimelate epimerase from Cupriavidus pinatubonensis (strain JMP 134 / LMG 1197) (Cupriavidus necator (strain JMP 134)).